The chain runs to 578 residues: Proline--tRNA ligase (578 aa).

This sequence belongs to the class-II aminoacyl-tRNA synthetase family. ProS type 1 subfamily. In terms of assembly, homodimer.

It is found in the cytoplasm. The enzyme catalyses tRNA(Pro) + L-proline + ATP = L-prolyl-tRNA(Pro) + AMP + diphosphate. Catalyzes the attachment of proline to tRNA(Pro) in a two-step reaction: proline is first activated by ATP to form Pro-AMP and then transferred to the acceptor end of tRNA(Pro). As ProRS can inadvertently accommodate and process non-cognate amino acids such as alanine and cysteine, to avoid such errors it has two additional distinct editing activities against alanine. One activity is designated as 'pretransfer' editing and involves the tRNA(Pro)-independent hydrolysis of activated Ala-AMP. The other activity is designated 'posttransfer' editing and involves deacylation of mischarged Ala-tRNA(Pro). The misacylated Cys-tRNA(Pro) is not edited by ProRS. This chain is Proline--tRNA ligase, found in Burkholderia ambifaria (strain ATCC BAA-244 / DSM 16087 / CCUG 44356 / LMG 19182 / AMMD) (Burkholderia cepacia (strain AMMD)).